Consider the following 77-residue polypeptide: Acyl carrier protein (77 aa).

One can recognise a Carrier domain in the interval 1 to 76 (MSLEDDVKAI…DVIKYIQERQ (76 aa)). S36 carries the post-translational modification O-(pantetheine 4'-phosphoryl)serine.

The protein belongs to the acyl carrier protein (ACP) family. 4'-phosphopantetheine is transferred from CoA to a specific serine of apo-ACP by AcpS. This modification is essential for activity because fatty acids are bound in thioester linkage to the sulfhydryl of the prosthetic group.

The protein resides in the cytoplasm. The protein operates within lipid metabolism; fatty acid biosynthesis. Its function is as follows. Carrier of the growing fatty acid chain in fatty acid biosynthesis. The sequence is that of Acyl carrier protein from Chlamydia trachomatis serovar A (strain ATCC VR-571B / DSM 19440 / HAR-13).